The sequence spans 495 residues: Serine/threonine protein phosphatase 2A 57 kDa regulatory subunit B' alpha isoform (495 aa).

Residues 1-13 are compositionally biased toward basic residues; sequence MFKKIMKGANRKA. Disordered regions lie at residues 1–61 and 462–495; these read MFKK…AATT and QAKS…MITS. Polar residues predominate over residues 49–61; the sequence is VPSSPNSMAAATT.

The protein belongs to the phosphatase 2A regulatory subunit B56 family. As to quaternary structure, PP2A consists of a common heteromeric enzyme, composed of a catalytic subunit (subunits C), a constant regulatory subunit (subunit A), and a variety of regulatory subunits such as subunits B (the R2/B/PR55/B55, R3/B''/PR72/PR130/PR59 and R5/B'/B56 families). Interacts with BZR1. Interacts with BRI1. Interacts with SRK2E/OST1. As to expression, expressed ubiquitously, higher levels in leaves.

Its subcellular location is the nucleus. The protein resides in the cytoplasm. In terms of biological role, the B regulatory subunit may modulate substrate selectivity and catalytic activity, and may also direct the localization of the catalytic enzyme to a particular subcellular compartment. Required for the formation of the PP2A holoenzyme that positively regulates brassinosteroid signaling by dephosphorylating and activating BZR1. This chain is Serine/threonine protein phosphatase 2A 57 kDa regulatory subunit B' alpha isoform (B'ALPHA), found in Arabidopsis thaliana (Mouse-ear cress).